The sequence spans 171 residues: MVILGIDPGSRITGFGVIKVQDNKIYYVASGCIRITEITTPKRLKQIADGITQIINIYAPTEAAIEQIFMFQNPMGAIKLGQARGVAMCTLAINNLEVSEYSAKQIKQAVVGTGGAAKSQVQHMVQSLLGLSKKPPEDAADALAIAICHYHSSKSLAKISGASRVSQKRIK.

Active-site residues include D7, E66, and D138. The Mg(2+) site is built by D7, E66, and D138.

Belongs to the RuvC family. Homodimer which binds Holliday junction (HJ) DNA. The HJ becomes 2-fold symmetrical on binding to RuvC with unstacked arms; it has a different conformation from HJ DNA in complex with RuvA. In the full resolvosome a probable DNA-RuvA(4)-RuvB(12)-RuvC(2) complex forms which resolves the HJ. Requires Mg(2+) as cofactor.

It localises to the cytoplasm. It catalyses the reaction Endonucleolytic cleavage at a junction such as a reciprocal single-stranded crossover between two homologous DNA duplexes (Holliday junction).. Functionally, the RuvA-RuvB-RuvC complex processes Holliday junction (HJ) DNA during genetic recombination and DNA repair. Endonuclease that resolves HJ intermediates. Cleaves cruciform DNA by making single-stranded nicks across the HJ at symmetrical positions within the homologous arms, yielding a 5'-phosphate and a 3'-hydroxyl group; requires a central core of homology in the junction. The consensus cleavage sequence is 5'-(A/T)TT(C/G)-3'. Cleavage occurs on the 3'-side of the TT dinucleotide at the point of strand exchange. HJ branch migration catalyzed by RuvA-RuvB allows RuvC to scan DNA until it finds its consensus sequence, where it cleaves and resolves the cruciform DNA. The chain is Crossover junction endodeoxyribonuclease RuvC from Francisella tularensis subsp. mediasiatica (strain FSC147).